We begin with the raw amino-acid sequence, 307 residues long: Protoheme IX farnesyltransferase (307 aa).

The next 8 membrane-spanning stretches (helical) occupy residues 38 to 58 (NTLT…LSVL), 65 to 85 (FFTI…NNYI), 108 to 128 (PGFA…FLLL), 131 to 151 (PMAV…YSLW), 158 to 178 (LNTV…WAAI), 186 to 206 (IAWM…LALA), 251 to 271 (LGIT…VLGF), and 287 to 307 (FVYS…VTFF).

It belongs to the UbiA prenyltransferase family. Protoheme IX farnesyltransferase subfamily. In terms of assembly, interacts with CtaA.

The protein localises to the cell membrane. The catalysed reaction is heme b + (2E,6E)-farnesyl diphosphate + H2O = Fe(II)-heme o + diphosphate. It functions in the pathway porphyrin-containing compound metabolism; heme O biosynthesis; heme O from protoheme: step 1/1. In terms of biological role, converts heme B (protoheme IX) to heme O by substitution of the vinyl group on carbon 2 of heme B porphyrin ring with a hydroxyethyl farnesyl side group. This is Protoheme IX farnesyltransferase from Bacillus thuringiensis (strain Al Hakam).